We begin with the raw amino-acid sequence, 334 residues long: DNA polymerase beta (334 aa).

3 residues coordinate K(+): Lys-60, Leu-62, and Val-65. Positions 60, 62, and 65 each coordinate Na(+). Lys-72 acts as the Nucleophile; Schiff-base intermediate with DNA; for 5'-dRP lyase activity in catalysis. Arg-83 carries the post-translational modification Omega-N-methylarginine; by PRMT6. K(+) contacts are provided by Thr-101, Val-103, and Ile-106. Residues Thr-101, Val-103, and Ile-106 each contribute to the Na(+) site. Arg-149 contributes to the a 2'-deoxyribonucleoside 5'-triphosphate binding site. Arg-152 is modified (omega-N-methylarginine; by PRMT6). Residues Ser-180, Arg-183, Gly-189, and Asp-190 each contribute to the a 2'-deoxyribonucleoside 5'-triphosphate site. The segment at 183-192 (RGAESSGDMD) is DNA-binding. Residues Asp-190, Asp-192, and Asp-255 each contribute to the Mg(2+) site.

It belongs to the DNA polymerase type-X family. Monomer. Requires Mg(2+) as cofactor. In terms of processing, methylation by PRMT6 stimulates the polymerase activity by enhancing DNA binding and processivity. Post-translationally, ubiquitinated: monoubiquitinated by huwe1/arf-bp1. Monoubiquitinated protein is then the target of stub1/chip, which catalyzes polyubiquitination from monoubiquitin, leading to degradation by the proteasome. usp47 mediates the deubiquitination of monoubiquitinated protein, preventing polyubiquitination by STUB1/CHIP and its subsequent degradation.

The protein localises to the nucleus. The protein resides in the cytoplasm. The enzyme catalyses DNA(n) + a 2'-deoxyribonucleoside 5'-triphosphate = DNA(n+1) + diphosphate. It catalyses the reaction a 5'-end 2'-deoxyribose-2'-deoxyribonucleotide-DNA = (2E,4S)-4-hydroxypenten-2-al-5-phosphate + a 5'-end 5'-phospho-2'-deoxyribonucleoside-DNA + H(+). It carries out the reaction 2'-deoxyribonucleotide-(2'-deoxyribose 5'-phosphate)-2'-deoxyribonucleotide-DNA = a 3'-end 2'-deoxyribonucleotide-(2,3-dehydro-2,3-deoxyribose 5'-phosphate)-DNA + a 5'-end 5'-phospho-2'-deoxyribonucleoside-DNA + H(+). In terms of biological role, repair polymerase that plays a key role in base-excision repair. During this process, the damaged base is excised by specific DNA glycosylases, the DNA backbone is nicked at the abasic site by an apurinic/apyrimidic (AP) endonuclease, and POLB removes 5'-deoxyribose-phosphate from the preincised AP site acting as a 5'-deoxyribose-phosphate lyase (5'-dRP lyase); through its DNA polymerase activity, it adds one nucleotide to the 3' end of the arising single-nucleotide gap. Conducts 'gap-filling' DNA synthesis in a stepwise distributive fashion rather than in a processive fashion as for other DNA polymerases. It is also able to cleave sugar-phosphate bonds 3' to an intact AP site, acting as an AP lyase. This Xenopus laevis (African clawed frog) protein is DNA polymerase beta (polb).